Consider the following 535-residue polypeptide: GMP synthase [glutamine-hydrolyzing] (535 aa).

The Glutamine amidotransferase type-1 domain maps to 24–217 (KILIVDFGSQ…VRKVAGLKGD (194 aa)). Catalysis depends on Cys-101, which acts as the Nucleophile. Catalysis depends on residues His-191 and Glu-193. A GMPS ATP-PPase domain is found at 218-410 (WTMRAFREEA…LGLPEVFVGR (193 aa)). 245–251 (SGGVDSA) contacts ATP.

Homodimer.

It catalyses the reaction XMP + L-glutamine + ATP + H2O = GMP + L-glutamate + AMP + diphosphate + 2 H(+). It functions in the pathway purine metabolism; GMP biosynthesis; GMP from XMP (L-Gln route): step 1/1. Catalyzes the synthesis of GMP from XMP. The polypeptide is GMP synthase [glutamine-hydrolyzing] (Rhodopseudomonas palustris (strain BisB18)).